The sequence spans 378 residues: Spermidine/putrescine import ATP-binding protein PotA (378 aa).

The region spanning 18-248 (VLLSGISKSF…PKNLFVAGFI (231 aa)) is the ABC transporter domain. 50–57 (GPSGCGKT) is an ATP binding site.

The protein belongs to the ABC transporter superfamily. Spermidine/putrescine importer (TC 3.A.1.11.1) family. The complex is composed of two ATP-binding proteins (PotA), two transmembrane proteins (PotB and PotC) and a solute-binding protein (PotD).

It is found in the cell inner membrane. It catalyses the reaction ATP + H2O + polyamine-[polyamine-binding protein]Side 1 = ADP + phosphate + polyamineSide 2 + [polyamine-binding protein]Side 1.. Part of the ABC transporter complex PotABCD involved in spermidine/putrescine import. Responsible for energy coupling to the transport system. The polypeptide is Spermidine/putrescine import ATP-binding protein PotA (Salmonella paratyphi A (strain ATCC 9150 / SARB42)).